Consider the following 745-residue polypeptide: Aminopeptidase NAALADL1 (745 aa).

The Cytoplasmic portion of the chain corresponds to 1–6 (MHWVKI). A helical; Signal-anchor for type II membrane protein membrane pass occupies residues 7–28 (LGVALGAAALLGLGIILGHFAI). At 29–745 (PKATSPLTSS…AATLVPVADL (717 aa)) the chain is on the extracellular side. N-linked (GlcNAc...) asparagine glycans are attached at residues Asn128, Asn141, and Asn235. Ca(2+)-binding residues include Thr263 and Leu266. 3 N-linked (GlcNAc...) asparagine glycosylation sites follow: Asn279, Asn302, and Asn329. Cys301 and Cys318 are oxidised to a cystine. Zn(2+) contacts are provided by His373 and Asp383. Glu421 functions as the Proton donor/acceptor in the catalytic mechanism. Residue Glu422 coordinates Zn(2+). 2 residues coordinate Ca(2+): Glu430 and Glu433. Asp450 provides a ligand contact to Zn(2+). 2 N-linked (GlcNAc...) asparagine glycosylation sites follow: Asn456 and Asn497. His550 is a binding site for Zn(2+). Asn593 and Asn620 each carry an N-linked (GlcNAc...) asparagine glycan.

It belongs to the peptidase M28 family. M28B subfamily. As to quaternary structure, homodimer. Zn(2+) serves as cofactor. In terms of processing, N-glycosylated.

The protein localises to the apical cell membrane. Aminopeptidase with broad substrate specificity. Has lower activity with substrates that have Asp or Glu in the P2' position, or Pro in the P3' position. Lacks activity with substrates that have both Pro in the P3' position and Asp or Glu in the P2' position. Lacks carboxypeptidase activity. Lacks dipeptidyl-peptidase IV type activity. The protein is Aminopeptidase NAALADL1 (Naaladl1) of Mus musculus (Mouse).